A 481-amino-acid polypeptide reads, in one-letter code: Cholesterol 16,22-dihydroxylase CYP90G4 (481 aa).

Residues 4-24 (SYLSFFVLSSILVLTLIFFFM) form a helical membrane-spanning segment. C426 is a heme binding site.

This sequence belongs to the cytochrome P450 family. As to expression, mainly expressed in leaves and seed pods and, at low levels, in flowers and stems.

Its subcellular location is the membrane. It participates in steroid metabolism; cholesterol metabolism. Its function is as follows. Involved in the biosynthesis of spiroketal steroid and saponin natural products from cholesterol such as diosgenin and analogs (e.g. furostanol and spirostanol), plant defense compounds used as main precursors for the industrial production of steroid hormones. During the 5,6-spiroketalization of cholesterol, catalyzes the hydroxylation of cholesterol to form 16S,22S-dihydroxycholesterol and, possibly, the subsequent conversion of 16S,22S-dihydroxycholesterol into 16-oxo-22-hydroxy-cholesterol and 16-hydroxy-22-oxo-cholesterol. 16-hydroxy-22-oxo-cholesterol submit a spontaneous reaction leading to the production of furostanol-type steroid diastereomers, precursors of diosgenin. The chain is Cholesterol 16,22-dihydroxylase CYP90G4 from Trigonella foenum-graecum (Fenugreek).